Here is a 294-residue protein sequence, read N- to C-terminus: UDP-3-O-acyl-N-acetylglucosamine deacetylase (294 aa).

Zn(2+) is bound by residues H75, H232, and D236. H259 functions as the Proton donor in the catalytic mechanism.

Belongs to the LpxC family. Zn(2+) is required as a cofactor.

The catalysed reaction is a UDP-3-O-[(3R)-3-hydroxyacyl]-N-acetyl-alpha-D-glucosamine + H2O = a UDP-3-O-[(3R)-3-hydroxyacyl]-alpha-D-glucosamine + acetate. Its pathway is glycolipid biosynthesis; lipid IV(A) biosynthesis; lipid IV(A) from (3R)-3-hydroxytetradecanoyl-[acyl-carrier-protein] and UDP-N-acetyl-alpha-D-glucosamine: step 2/6. In terms of biological role, catalyzes the hydrolysis of UDP-3-O-myristoyl-N-acetylglucosamine to form UDP-3-O-myristoylglucosamine and acetate, the committed step in lipid A biosynthesis. This Campylobacter curvus (strain 525.92) protein is UDP-3-O-acyl-N-acetylglucosamine deacetylase.